Here is a 172-residue protein sequence, read N- to C-terminus: Large ribosomal subunit protein eL20A (172 aa).

Serine 32 is modified (phosphoserine). Glycyl lysine isopeptide (Lys-Gly) (interchain with G-Cter in ubiquitin) cross-links involve residues lysine 125, lysine 131, and lysine 149.

The protein belongs to the eukaryotic ribosomal protein eL20 family. As to quaternary structure, component of the large ribosomal subunit (LSU). Mature yeast ribosomes consist of a small (40S) and a large (60S) subunit. The 40S small subunit contains 1 molecule of ribosomal RNA (18S rRNA) and 33 different proteins (encoded by 57 genes). The large 60S subunit contains 3 rRNA molecules (25S, 5.8S and 5S rRNA) and 46 different proteins (encoded by 81 genes). eL20 forms multiple interactions with RNA and proteins in the central protuberance, connecting components of core functional centers that are located far apart.

The protein resides in the cytoplasm. Component of the ribosome, a large ribonucleoprotein complex responsible for the synthesis of proteins in the cell. The small ribosomal subunit (SSU) binds messenger RNAs (mRNAs) and translates the encoded message by selecting cognate aminoacyl-transfer RNA (tRNA) molecules. The large subunit (LSU) contains the ribosomal catalytic site termed the peptidyl transferase center (PTC), which catalyzes the formation of peptide bonds, thereby polymerizing the amino acids delivered by tRNAs into a polypeptide chain. The nascent polypeptides leave the ribosome through a tunnel in the LSU and interact with protein factors that function in enzymatic processing, targeting, and the membrane insertion of nascent chains at the exit of the ribosomal tunnel. The polypeptide is Large ribosomal subunit protein eL20A (Saccharomyces cerevisiae (strain ATCC 204508 / S288c) (Baker's yeast)).